We begin with the raw amino-acid sequence, 267 residues long: Small ribosomal subunit protein uS2 (267 aa).

The segment at Gly224 to Lys244 is disordered. The span at Asp235–Lys244 shows a compositional bias: basic and acidic residues.

The protein belongs to the universal ribosomal protein uS2 family.

In Lactiplantibacillus plantarum (strain ATCC BAA-793 / NCIMB 8826 / WCFS1) (Lactobacillus plantarum), this protein is Small ribosomal subunit protein uS2.